Reading from the N-terminus, the 129-residue chain is NADH-quinone oxidoreductase subunit A (129 aa).

The next 3 membrane-spanning stretches (helical) occupy residues phenylalanine 9–alanine 29, leucine 68–leucine 88, and leucine 97–valine 117.

The protein belongs to the complex I subunit 3 family. NDH-1 is composed of 14 different subunits. Subunits NuoA, H, J, K, L, M, N constitute the membrane sector of the complex.

It localises to the cell inner membrane. The catalysed reaction is a quinone + NADH + 5 H(+)(in) = a quinol + NAD(+) + 4 H(+)(out). Its function is as follows. NDH-1 shuttles electrons from NADH, via FMN and iron-sulfur (Fe-S) centers, to quinones in the respiratory chain. The immediate electron acceptor for the enzyme in this species is believed to be ubiquinone. Couples the redox reaction to proton translocation (for every two electrons transferred, four hydrogen ions are translocated across the cytoplasmic membrane), and thus conserves the redox energy in a proton gradient. This Anaeromyxobacter sp. (strain K) protein is NADH-quinone oxidoreductase subunit A.